The sequence spans 337 residues: tRNA N6-adenosine threonylcarbamoyltransferase (337 aa).

Fe cation contacts are provided by histidine 111 and histidine 115. Substrate is bound by residues 134–138, aspartate 167, glycine 180, and asparagine 272; that span reads LVSGG. Residue aspartate 300 coordinates Fe cation.

Belongs to the KAE1 / TsaD family. Fe(2+) serves as cofactor.

It localises to the cytoplasm. The catalysed reaction is L-threonylcarbamoyladenylate + adenosine(37) in tRNA = N(6)-L-threonylcarbamoyladenosine(37) in tRNA + AMP + H(+). Functionally, required for the formation of a threonylcarbamoyl group on adenosine at position 37 (t(6)A37) in tRNAs that read codons beginning with adenine. Is involved in the transfer of the threonylcarbamoyl moiety of threonylcarbamoyl-AMP (TC-AMP) to the N6 group of A37, together with TsaE and TsaB. TsaD likely plays a direct catalytic role in this reaction. The protein is tRNA N6-adenosine threonylcarbamoyltransferase of Erwinia tasmaniensis (strain DSM 17950 / CFBP 7177 / CIP 109463 / NCPPB 4357 / Et1/99).